The primary structure comprises 412 residues: Alpha-2,8-sialyltransferase 8E (412 aa).

Residues M1–R16 lie on the Cytoplasmic side of the membrane. A helical; Signal-anchor for type II membrane protein membrane pass occupies residues T17–Y37. Over S38–C412 the chain is Lumenal. N-linked (GlcNAc...) asparagine glycosylation is found at N58, N64, N73, and N92. 2 disulfides stabilise this stretch: C200–C349 and C214–C409. Substrate contacts are provided by residues N228 and N250–S252. Residue N277 is glycosylated (N-linked (GlcNAc...) asparagine). S336–G338 lines the substrate pocket. H384 serves as the catalytic Proton donor/acceptor.

The protein belongs to the glycosyltransferase 29 family. In terms of tissue distribution, highly expressed in brain. Expressed at low levels in other tissues, including liver, testis, lung, placenta and spleen.

It localises to the golgi apparatus membrane. The catalysed reaction is a ganglioside GT1b (d18:1(4E)) + CMP-N-acetyl-beta-neuraminate = a ganglioside GQ1b (d18:1(4E)) + CMP + H(+). The enzyme catalyses a ganglioside GD3 (d18:1(4E)) + CMP-N-acetyl-beta-neuraminate = a ganglioside GT3 (d18:1(4E)) + CMP + H(+). It catalyses the reaction a ganglioside GD1a (d18:1(4E)) + CMP-N-acetyl-beta-neuraminate = a ganglioside GT1a (d18:1(4E)) + CMP + H(+). It carries out the reaction a ganglioside GM1b (d18:1(4E)) + CMP-N-acetyl-beta-neuraminate = a ganglioside GD1c (d18:1(4E)) + CMP + H(+). The catalysed reaction is a ganglioside GQ1c (d18:1(4E)) + CMP-N-acetyl-beta-neuraminate = a ganglioside GP1c (d18:1(4E)) + CMP + H(+). It functions in the pathway protein modification; protein glycosylation. In terms of biological role, involved in the synthesis of gangliosides GD1c, GT1a, GQ1b, GP1c and GT3 from GD1a, GT1b, GM1b and GD3 respectively. The chain is Alpha-2,8-sialyltransferase 8E from Mus musculus (Mouse).